The following is a 630-amino-acid chain: Angiotensin-converting enzyme-related protein (630 aa).

The N-terminal stretch at 1–22 (MGACNITVLLLVIMLWLPHGLS) is a signal peptide. The Peptidase M2 domain maps to 28-615 (SASVLEARRF…SRLGVPLGWG (588 aa)). Intrachain disulfides connect Cys-142–Cys-150 and Cys-344–Cys-362. His-375 lines the Zn(2+) pocket. Glu-376 serves as the catalytic Proton acceptor. Zn(2+) is bound by residues His-379 and Glu-403. His-505 acts as the Proton donor in catalysis. Cysteines 530 and 548 form a disulfide.

This sequence belongs to the peptidase M2 family. Requires Zn(2+) as cofactor. Post-translationally, glycosylated.

Its subcellular location is the secreted. It localises to the extracellular space. It catalyses the reaction Release of a C-terminal dipeptide, oligopeptide-|-Xaa-Yaa, when Xaa is not Pro, and Yaa is neither Asp nor Glu. Thus, conversion of angiotensin I to angiotensin II, with increase in vasoconstrictor activity, but no action on angiotensin II.. With respect to regulation, inhibited by captopril, lisinopril, trandolaprilat, fosinoprilat and enalaprilat. In terms of biological role, may be involved in the specific maturation or degradation of a number of bioactive peptides. May have a role in the specification of heart progenitors. The protein is Angiotensin-converting enzyme-related protein (Acer) of Drosophila melanogaster (Fruit fly).